The following is an 833-amino-acid chain: MutS protein homolog 5 (833 aa).

The tract at residues 1-45 (MAFRATPGRTPPGPGPRSGIPSASFPSPQPPMAGPGGIEEEDEEE) is disordered. 591-598 (GPNSSGKS) is an ATP binding site.

The protein belongs to the DNA mismatch repair MutS family. In terms of assembly, heterooligomer of MSH4 and MSH5. Interacts with HJURP. Interacts with REDIC1.

Its function is as follows. Involved in DNA mismatch repair and meiotic recombination processes. Facilitates crossovers between homologs during meiosis. This chain is MutS protein homolog 5 (Msh5), found in Mus musculus (Mouse).